A 130-amino-acid polypeptide reads, in one-letter code: Small ribosomal subunit protein uS9 (130 aa).

The interval 108–130 (PRMKERRKYGLKKARRAPQFSKR) is disordered. Residues 111–130 (KERRKYGLKKARRAPQFSKR) are compositionally biased toward basic residues.

Belongs to the universal ribosomal protein uS9 family.

In Desulforamulus reducens (strain ATCC BAA-1160 / DSM 100696 / MI-1) (Desulfotomaculum reducens), this protein is Small ribosomal subunit protein uS9.